Consider the following 200-residue polypeptide: 3-isopropylmalate dehydratase small subunit (200 aa).

It belongs to the LeuD family. LeuD type 1 subfamily. Heterodimer of LeuC and LeuD.

It catalyses the reaction (2R,3S)-3-isopropylmalate = (2S)-2-isopropylmalate. It functions in the pathway amino-acid biosynthesis; L-leucine biosynthesis; L-leucine from 3-methyl-2-oxobutanoate: step 2/4. Its function is as follows. Catalyzes the isomerization between 2-isopropylmalate and 3-isopropylmalate, via the formation of 2-isopropylmaleate. The protein is 3-isopropylmalate dehydratase small subunit of Aliivibrio salmonicida (strain LFI1238) (Vibrio salmonicida (strain LFI1238)).